Reading from the N-terminus, the 136-residue chain is Large ribosomal subunit protein uL22 (136 aa).

The protein belongs to the universal ribosomal protein uL22 family. In terms of assembly, part of the 50S ribosomal subunit.

In terms of biological role, this protein binds specifically to 23S rRNA; its binding is stimulated by other ribosomal proteins, e.g. L4, L17, and L20. It is important during the early stages of 50S assembly. It makes multiple contacts with different domains of the 23S rRNA in the assembled 50S subunit and ribosome. The globular domain of the protein is located near the polypeptide exit tunnel on the outside of the subunit, while an extended beta-hairpin is found that lines the wall of the exit tunnel in the center of the 70S ribosome. The protein is Large ribosomal subunit protein uL22 of Bacteroides thetaiotaomicron (strain ATCC 29148 / DSM 2079 / JCM 5827 / CCUG 10774 / NCTC 10582 / VPI-5482 / E50).